We begin with the raw amino-acid sequence, 90 residues long: UPF0386 protein Rru_A2144 (90 aa).

It belongs to the UPF0386 family.

This chain is UPF0386 protein Rru_A2144, found in Rhodospirillum rubrum (strain ATCC 11170 / ATH 1.1.1 / DSM 467 / LMG 4362 / NCIMB 8255 / S1).